The primary structure comprises 89 residues: Defensin-like protein 108 (89 aa).

The N-terminal stretch at 1–20 is a signal peptide; the sequence is MTSLIAFLFTVLVIVSSVHC. Disulfide bonds link Cys39-Cys81, Cys49-Cys71, Cys57-Cys79, and Cys61-Cys80.

It belongs to the DEFL family.

The protein localises to the secreted. This is Defensin-like protein 108 (LCR51) from Arabidopsis thaliana (Mouse-ear cress).